Consider the following 226-residue polypeptide: Ribose-5-phosphate isomerase A (226 aa).

Residues 26–29, 82–85, and 95–98 each bind substrate; these read TGST, DGAD, and KGGG. The active-site Proton acceptor is the Glu-104. Lys-122 contacts substrate.

This sequence belongs to the ribose 5-phosphate isomerase family. Homodimer.

It catalyses the reaction aldehydo-D-ribose 5-phosphate = D-ribulose 5-phosphate. Its pathway is carbohydrate degradation; pentose phosphate pathway; D-ribose 5-phosphate from D-ribulose 5-phosphate (non-oxidative stage): step 1/1. Catalyzes the reversible conversion of ribose-5-phosphate to ribulose 5-phosphate. This chain is Ribose-5-phosphate isomerase A, found in Streptococcus thermophilus (strain ATCC BAA-250 / LMG 18311).